Consider the following 250-residue polypeptide: Cyclopentanol dehydrogenase (250 aa).

NAD(+) is bound by residues methionine 18, aspartate 37, aspartate 63, valine 64, asparagine 90, tyrosine 155, lysine 159, isoleucine 188, threonine 190, and threonine 193. Tyrosine 155 acts as the Proton acceptor in catalysis.

The protein belongs to the short-chain dehydrogenases/reductases (SDR) family.

The enzyme catalyses cyclopentanol + NAD(+) = cyclopentanone + NADH + H(+). The catalysed reaction is cyclohexanol + NAD(+) = cyclohexanone + NADH + H(+). Its pathway is alcohol metabolism; cyclopentanol degradation; 5-valerolactone from cyclopentanol: step 1/2. Its function is as follows. Catalyzes the oxidation of cyclopentanol to cyclopentanone and cyclohexanol to cyclohexanone. The activity toward cyclohexanol is 60% that of cyclopentanol. In Comamonas sp. (strain NCIMB 9872), this protein is Cyclopentanol dehydrogenase.